Here is a 453-residue protein sequence, read N- to C-terminus: Cysteine--tRNA ligase (453 aa).

A Zn(2+)-binding site is contributed by Cys-30. Residues 32 to 42 carry the 'HIGH' region motif; it reads PTVYDRAHLGN. Zn(2+) contacts are provided by Cys-212, His-237, and Glu-241. Residues 268 to 272 carry the 'KMSKS' region motif; it reads KMSKS. Lys-271 lines the ATP pocket.

It belongs to the class-I aminoacyl-tRNA synthetase family. In terms of assembly, monomer. Zn(2+) serves as cofactor.

The protein resides in the cytoplasm. The enzyme catalyses tRNA(Cys) + L-cysteine + ATP = L-cysteinyl-tRNA(Cys) + AMP + diphosphate. The sequence is that of Cysteine--tRNA ligase from Jannaschia sp. (strain CCS1).